The primary structure comprises 260 residues: Chlorocatechol 1,2-dioxygenase (260 aa).

Tyrosine 130, tyrosine 164, histidine 188, and histidine 190 together coordinate Fe cation.

This sequence belongs to the intradiol ring-cleavage dioxygenase family. Fe(3+) is required as a cofactor.

The enzyme catalyses 3-chlorocatechol + O2 = (2E,4Z)-2-chloromuconate + 2 H(+). It carries out the reaction 3,5-dichlorocatechol + O2 = (2E,4E)-2,4-dichloromuconate + 2 H(+). The protein operates within aromatic compound metabolism; 3-chlorocatechol degradation. Functionally, preferentially converts 3-chlorocatechol and 3,5-dichlorocatechol as opposed to other chlorinated catechols. Retains diminished activity toward non-chlorinated substrates. This Pseudomonas putida (Arthrobacter siderocapsulatus) protein is Chlorocatechol 1,2-dioxygenase (clcA).